The following is a 191-amino-acid chain: Signal peptidase complex catalytic subunit sec11 (191 aa).

Over 1 to 14 (MLSFLSSNISNARQ) the chain is Cytoplasmic. Residues 15 to 33 (TLAQVLNFALVLSSAFMMW) traverse the membrane as a helical; Signal-anchor for type II membrane protein segment. At 34–191 (KGLSVFTGSS…MGVMVMLQRE (158 aa)) the chain is on the lumenal side. Active-site charge relay system residues include S53, H92, and D133. The interval 177–188 (VLLGIMGVMVML) is C-terminal short (CTS) helix.

Belongs to the peptidase S26B family. Component of the signal peptidase complex (SPC) composed of a catalytic subunit SEC11 and three accessory subunits SPC1, SPC2 and SPC3. The complex induces a local thinning of the ER membrane which is used to measure the length of the signal peptide (SP) h-region of protein substrates. This ensures the selectivity of the complex towards h-regions shorter than 18-20 amino acids. SPC associates with the translocon complex.

The protein localises to the endoplasmic reticulum membrane. It catalyses the reaction Cleavage of hydrophobic, N-terminal signal or leader sequences from secreted and periplasmic proteins.. Functionally, catalytic component of the signal peptidase complex (SPC) which catalyzes the cleavage of N-terminal signal sequences from nascent proteins as they are translocated into the lumen of the endoplasmic reticulum. Specifically cleaves N-terminal signal peptides that contain a hydrophobic alpha-helix (h-region) shorter than 18-20 amino acids. This Aspergillus terreus (strain NIH 2624 / FGSC A1156) protein is Signal peptidase complex catalytic subunit sec11 (sec11).